The sequence spans 239 residues: Phosphothreonine lyase OspF (239 aa).

The Proton donor role is filled by H104. The Proton acceptor role is filled by K134.

Belongs to the phosphothreonine lyase family.

The protein localises to the secreted. Inhibited by the tyrosine phosphatase inhibitor vanadate. Catalyzes the removal of the phosphate group from the phosphothreonine in the mitogen-activated protein kinases such as MAPK2/ERK2, MAPK3/ERK1, MAPK8 and MAPK14 in an irreversible reaction, thus preventing the downstream phosphorylation of histone H3. This epigenetic modification results in inhibition of the transcription of a specific subset of pro-inflammatory genes, and ultimately to a reduced immune response against the invading pathogen. The diminished immune response enhances the bacterium's ability to disseminate and multiply within the host. This Shigella flexneri protein is Phosphothreonine lyase OspF (ospF).